A 337-amino-acid polypeptide reads, in one-letter code: MAPIKVGINGFGRIGRIVFRNAVEHPDVEIVAVNDPFIETKYAAYMLKYDSTHGIFNGEIAQDGNDLVINGKKVKFYTERDPAVIPWKETGADYVVESTGVFTTIDKAKAHLQGGAKKVIISAPSADAPMYVMGVNEKSYDGSAVISQASCTTNCLAPLAKVINDKYTIIEGLMTTVHSYTATQKTVDGPSAKDWRGGRTAAQNIIPSSTGAPKAVGKVIPELNGKLTGMSMRVPTANVSVVDLTVRIEKGATYDEIKQAIKEAAEGPLKGVLAYTEDDFVSTDMIGNPNSSIFDAKAGISLNNNFVKLVSWYDNEWGYSRRVLDLLAHVAKVDASK.

NAD(+) is bound by residues Arg13–Ile14, Asp35, and Arg80. Residues Ser150–Thr152, Thr181, Thr210–Gly211, and Arg233 each bind D-glyceraldehyde 3-phosphate. Catalysis depends on Cys151, which acts as the Nucleophile. An NAD(+)-binding site is contributed by Asn315.

It belongs to the glyceraldehyde-3-phosphate dehydrogenase family. As to quaternary structure, homotetramer.

The protein localises to the cytoplasm. It carries out the reaction D-glyceraldehyde 3-phosphate + phosphate + NAD(+) = (2R)-3-phospho-glyceroyl phosphate + NADH + H(+). It participates in carbohydrate degradation; glycolysis; pyruvate from D-glyceraldehyde 3-phosphate: step 1/5. This is Glyceraldehyde-3-phosphate dehydrogenase (GPDA) from Colletotrichum lindemuthianum (Bean anthracnose fungus).